Consider the following 118-residue polypeptide: MHTLDSLDAESLRTDVPEFWPGDTLKVHVRVVEGNRQRIQVFQGAVIRRQGGGVRETFTVRKVSFGVGVERTFPLHSPIVSKIEIVTRGDVRRAKLYYLRQLRGKAAKIKEKRDPISR.

This sequence belongs to the bacterial ribosomal protein bL19 family.

Its function is as follows. This protein is located at the 30S-50S ribosomal subunit interface and may play a role in the structure and function of the aminoacyl-tRNA binding site. This Frankia alni (strain DSM 45986 / CECT 9034 / ACN14a) protein is Large ribosomal subunit protein bL19.